Consider the following 231-residue polypeptide: Large ribosomal subunit protein uL1 (231 aa).

It belongs to the universal ribosomal protein uL1 family. As to quaternary structure, part of the 50S ribosomal subunit.

Its function is as follows. Binds directly to 23S rRNA. The L1 stalk is quite mobile in the ribosome, and is involved in E site tRNA release. Protein L1 is also a translational repressor protein, it controls the translation of the L11 operon by binding to its mRNA. The chain is Large ribosomal subunit protein uL1 from Legionella pneumophila (strain Paris).